A 339-amino-acid polypeptide reads, in one-letter code: Replication factor C subunit 4 (339 aa).

49–56 contacts ATP; the sequence is GPPGTGKT.

This sequence belongs to the activator 1 small subunits family. As to quaternary structure, heterotetramer of subunits RFC2, RFC3, RFC4 and RFC5 that can form a complex with RFC1.

The protein resides in the nucleus. Functionally, may be involved in DNA replication and thus regulate cell proliferation. The chain is Replication factor C subunit 4 (RFC4) from Arabidopsis thaliana (Mouse-ear cress).